A 709-amino-acid chain; its full sequence is Elongation factor G (709 aa).

Residues 8-297 (ANTRNIGIMA…AVIDYLPSPL (290 aa)) form the tr-type G domain. GTP contacts are provided by residues 17 to 24 (AHVDAGKT), 81 to 85 (DTPGH), and 135 to 138 (NKMD).

It belongs to the TRAFAC class translation factor GTPase superfamily. Classic translation factor GTPase family. EF-G/EF-2 subfamily.

It is found in the cytoplasm. Catalyzes the GTP-dependent ribosomal translocation step during translation elongation. During this step, the ribosome changes from the pre-translocational (PRE) to the post-translocational (POST) state as the newly formed A-site-bound peptidyl-tRNA and P-site-bound deacylated tRNA move to the P and E sites, respectively. Catalyzes the coordinated movement of the two tRNA molecules, the mRNA and conformational changes in the ribosome. The sequence is that of Elongation factor G from Lactococcus lactis subsp. lactis (strain IL1403) (Streptococcus lactis).